A 210-amino-acid polypeptide reads, in one-letter code: 3-hexulose-6-phosphate synthase (210 aa).

This sequence belongs to the HPS/KGPDC family. HPS subfamily.

It carries out the reaction D-ribulose 5-phosphate + formaldehyde = D-arabino-hex-3-ulose 6-phosphate. The protein operates within one-carbon metabolism; formaldehyde assimilation via RuMP pathway; D-fructose 6-phosphate from D-ribulose 5-phosphate and formaldehyde: step 1/2. Its function is as follows. Catalyzes the condensation of ribulose 5-phosphate with formaldehyde to form 3-hexulose 6-phosphate. Together with HxlB, may act as a formaldehyde detoxification system. In Bacillus subtilis (strain 168), this protein is 3-hexulose-6-phosphate synthase (hxlA).